The primary structure comprises 215 residues: Cytochrome b6 (215 aa).

Residues 32–52 (IFYCLGGITLTCFLVQVASGF) form a helical membrane-spanning segment. Residue C35 coordinates heme c. Positions 86 and 100 each coordinate heme b. Helical transmembrane passes span 90 to 110 (ASMM…TGGF), 116 to 136 (LTWV…VTGY), and 186 to 206 (LHTF…FLMI). Heme b is bound by residues H187 and H202.

The protein belongs to the cytochrome b family. PetB subfamily. As to quaternary structure, the 4 large subunits of the cytochrome b6-f complex are cytochrome b6, subunit IV (17 kDa polypeptide, PetD), cytochrome f and the Rieske protein, while the 4 small subunits are PetG, PetL, PetM and PetN. The complex functions as a dimer. Heme b serves as cofactor. Requires heme c as cofactor.

Its subcellular location is the plastid. The protein localises to the chloroplast thylakoid membrane. Its function is as follows. Component of the cytochrome b6-f complex, which mediates electron transfer between photosystem II (PSII) and photosystem I (PSI), cyclic electron flow around PSI, and state transitions. The sequence is that of Cytochrome b6 from Anthoceros angustus (Hornwort).